A 238-amino-acid chain; its full sequence is Phosphoribosylaminoimidazole-succinocarboxamide synthase (238 aa).

Belongs to the SAICAR synthetase family.

The enzyme catalyses 5-amino-1-(5-phospho-D-ribosyl)imidazole-4-carboxylate + L-aspartate + ATP = (2S)-2-[5-amino-1-(5-phospho-beta-D-ribosyl)imidazole-4-carboxamido]succinate + ADP + phosphate + 2 H(+). The protein operates within purine metabolism; IMP biosynthesis via de novo pathway; 5-amino-1-(5-phospho-D-ribosyl)imidazole-4-carboxamide from 5-amino-1-(5-phospho-D-ribosyl)imidazole-4-carboxylate: step 1/2. This chain is Phosphoribosylaminoimidazole-succinocarboxamide synthase, found in Methanococcoides burtonii (strain DSM 6242 / NBRC 107633 / OCM 468 / ACE-M).